Reading from the N-terminus, the 548-residue chain is T-complex protein 1 subunit alpha (548 aa).

The protein belongs to the TCP-1 chaperonin family. In terms of assembly, heterooligomeric complex of about 850 to 900 kDa that forms two stacked rings, 12 to 16 nm in diameter.

Its subcellular location is the cytoplasm. Functionally, molecular chaperone; assists the folding of proteins upon ATP hydrolysis. Known to play a role, in vitro, in the folding of actin and tubulin. The polypeptide is T-complex protein 1 subunit alpha (tcp1) (Dictyostelium discoideum (Social amoeba)).